We begin with the raw amino-acid sequence, 339 residues long: Adenosine deaminase (339 aa).

H15 and H17 together coordinate Zn(2+). Substrate is bound by residues H17, D19, and G172. H199 is a Zn(2+) binding site. The Proton donor role is filled by E202. D279 provides a ligand contact to Zn(2+).

It belongs to the metallo-dependent hydrolases superfamily. Adenosine and AMP deaminases family. Adenosine deaminase subfamily. Zn(2+) is required as a cofactor.

The enzyme catalyses adenosine + H2O + H(+) = inosine + NH4(+). It carries out the reaction 2'-deoxyadenosine + H2O + H(+) = 2'-deoxyinosine + NH4(+). Catalyzes the hydrolytic deamination of adenosine and 2-deoxyadenosine. This is Adenosine deaminase from Lacticaseibacillus casei (strain BL23) (Lactobacillus casei).